The sequence spans 257 residues: 6-phosphogluconolactonase (257 aa).

A2 carries the N-acetylalanine modification. S49 carries the post-translational modification Phosphoserine. K180 is modified (N6-acetyllysine).

Belongs to the glucosamine/galactosamine-6-phosphate isomerase family. 6-phosphogluconolactonase subfamily.

It localises to the cytoplasm. It catalyses the reaction 6-phospho-D-glucono-1,5-lactone + H2O = 6-phospho-D-gluconate + H(+). The protein operates within carbohydrate degradation; pentose phosphate pathway; D-ribulose 5-phosphate from D-glucose 6-phosphate (oxidative stage): step 2/3. Functionally, hydrolysis of 6-phosphogluconolactone to 6-phosphogluconate. This is 6-phosphogluconolactonase from Rattus norvegicus (Rat).